We begin with the raw amino-acid sequence, 1055 residues long: Elongation factor 3 (1055 aa).

Valine 45 provides a ligand contact to ADP. HEAT repeat units lie at residues 45-86 (VEFF…NGAA), 96-133 (SAEN…SMNP), 135-172 (ASFV…SAPY), 175-213 (GEAM…LVEN), 217-255 (EKFV…APTI), 257-290 (LIAP…LVDS), and 295-337 (RPFL…VPVE). ABC transporter domains follow at residues 447–659 (CNIE…SYYQ) and 687–1004 (LKMR…KKAG). The ADP site is built by asparagine 723, glutamate 933, asparagine 936, and histidine 962. 2 disordered regions span residues 987–1006 (HNWV…AGDD) and 1024–1055 (EKKL…DEEL). Residues 1033–1044 (RKAKKDRMARRK) are compositionally biased toward basic residues.

The protein belongs to the ABC transporter superfamily. ABCF family. EF3 subfamily. In terms of assembly, associates with ribosomes.

The protein resides in the cytoplasm. Its subcellular location is the cytosol. The enzyme catalyses ATP + H2O = ADP + phosphate + H(+). Its pathway is protein biosynthesis; polypeptide chain elongation. Functionally, ribosome-dependent ATPase that functions in cytoplasmic translation elongation. Required for the ATP-dependent release of deacylated tRNA from the ribosomal E-site during protein biosynthesis. Stimulates the eEF1A-dependent binding of aminoacyl-tRNA to the ribosomal A-site, which has reduced affinity for tRNA as long as the E-site is occupied. Assists translation termination by stimulating the release of nascent protein from the ribosome by release factors. Appears to target calcium-channel protein CCH1 to the plasma membrane. In Cryptococcus neoformans var. neoformans serotype D (strain JEC21 / ATCC MYA-565) (Filobasidiella neoformans), this protein is Elongation factor 3.